A 54-amino-acid chain; its full sequence is UPF0391 membrane protein pRL90066 (54 aa).

Transmembrane regions (helical) follow at residues 5–25 (ALVFLVVALIAGVLGFGGIAG) and 28–48 (ASIAQVLFFIFLVLFVVSLVM).

Belongs to the UPF0391 family.

Its subcellular location is the cell membrane. The protein is UPF0391 membrane protein pRL90066 of Rhizobium johnstonii (strain DSM 114642 / LMG 32736 / 3841) (Rhizobium leguminosarum bv. viciae).